The following is a 511-amino-acid chain: Lysine--tRNA ligase (511 aa).

Residues 1–20 (MQKNTSQPTNTNEQSNQPSL) are disordered. Residues Glu-422 and Glu-429 each coordinate Mg(2+).

Belongs to the class-II aminoacyl-tRNA synthetase family. Homodimer. Mg(2+) is required as a cofactor.

It localises to the cytoplasm. It catalyses the reaction tRNA(Lys) + L-lysine + ATP = L-lysyl-tRNA(Lys) + AMP + diphosphate. This Chlorobium chlorochromatii (strain CaD3) protein is Lysine--tRNA ligase.